We begin with the raw amino-acid sequence, 333 residues long: FAD-dependent monooxygenase pytG (333 aa).

The chain crosses the membrane as a helical span at residues 6–26 (LPNVSVAIIGAGIGGLTLGAF). Positions 38 and 109 each coordinate FAD. Residue N303 is glycosylated (N-linked (GlcNAc...) asparagine).

The protein belongs to the paxM FAD-dependent monooxygenase family. FAD serves as cofactor.

It localises to the membrane. It participates in secondary metabolite biosynthesis. In terms of biological role, FAD-dependent monooxygenase; part of the gene cluster that mediates the biosynthesis of pyranterreones, a family of antioxidative compounds. The first step of pyranonigrins biosynthesis is performed by the hybrid PKS-NRPS synthetase pytA that condenses 4 malonyl-CoA units ato the acetyl starter unit by the modular PKS of pytA. The acyl chain is then connected to an L-serine through the amide bond by the modular NRPS of pytA. A tetramic acid is formed and released from the PKS-NRPS pytA to give pyranterreone 5 with the help of the thioesterase pytI. Pyranterreone 5 could be methylated by pytC to afford pyranterreone 6. Both pyranterreones 5 and 6 are subsequently oxidized by the FAD-linked oxidoreductase pytB and the cytochrome P450 monooxygenase pytD to form the fused gamma-pyrone core, resulting in pyranterreones 7 and 11, respectively. The hydroxy group at C-8 of pyranterreones 7 and 11 are dehydrated by the aspartyl protease pytH to form a delta-7 double bond to give pyranterreones 3 and 1, 2 accordingly. The exo-methylene of pyranterreone 3 could be reduced into a pendant methyl by reductase pytE to provide pyranterreone 4, also known as cordylactam. Pyranterreone 4 can be reconverted to pyranterreone 3 through pytB-catalyzed dehydrogenation or further oxidized to pyranterreones 9 and 10. The sequence is that of FAD-dependent monooxygenase pytG from Aspergillus terreus (strain NIH 2624 / FGSC A1156).